A 277-amino-acid polypeptide reads, in one-letter code: MEMO1 family protein MTH_45 (277 aa).

The protein belongs to the MEMO1 family.

The protein is MEMO1 family protein MTH_45 of Methanothermobacter thermautotrophicus (strain ATCC 29096 / DSM 1053 / JCM 10044 / NBRC 100330 / Delta H) (Methanobacterium thermoautotrophicum).